The sequence spans 425 residues: Glutamyl-tRNA reductase (425 aa).

Substrate-binding positions include 49 to 52 (TCNR), Ser109, 114 to 116 (EGQ), and Gln120. Cys50 acts as the Nucleophile in catalysis. Residue 189 to 194 (GAGKMS) coordinates NADP(+).

It belongs to the glutamyl-tRNA reductase family. As to quaternary structure, homodimer.

The catalysed reaction is (S)-4-amino-5-oxopentanoate + tRNA(Glu) + NADP(+) = L-glutamyl-tRNA(Glu) + NADPH + H(+). Its pathway is porphyrin-containing compound metabolism; protoporphyrin-IX biosynthesis; 5-aminolevulinate from L-glutamyl-tRNA(Glu): step 1/2. It functions in the pathway porphyrin-containing compound metabolism; chlorophyll biosynthesis. Functionally, catalyzes the NADPH-dependent reduction of glutamyl-tRNA(Glu) to glutamate 1-semialdehyde (GSA). This Picosynechococcus sp. (strain ATCC 27264 / PCC 7002 / PR-6) (Agmenellum quadruplicatum) protein is Glutamyl-tRNA reductase.